The chain runs to 471 residues: Cysteine--tRNA ligase (471 aa).

Cysteine 29 contributes to the Zn(2+) binding site. Positions 31-41 (PTVYNYIHIGN) match the 'HIGH' region motif. Zn(2+) is bound by residues cysteine 209, histidine 234, and glutamate 238. The 'KMSKS' region motif lies at 266–270 (KMSKS). ATP is bound at residue lysine 269.

It belongs to the class-I aminoacyl-tRNA synthetase family. As to quaternary structure, monomer. Zn(2+) is required as a cofactor.

The protein localises to the cytoplasm. The catalysed reaction is tRNA(Cys) + L-cysteine + ATP = L-cysteinyl-tRNA(Cys) + AMP + diphosphate. This chain is Cysteine--tRNA ligase, found in Listeria monocytogenes serotype 4b (strain CLIP80459).